The sequence spans 312 residues: ADP-L-glycero-D-manno-heptose-6-epimerase (312 aa).

NADP(+) contacts are provided by residues 10–11 (FI), 31–32 (DN), Lys-38, Lys-53, 75–79 (EGACS), and Asn-92. Tyr-140 serves as the catalytic Proton acceptor. Lys-144 provides a ligand contact to NADP(+). Asn-169 is a substrate binding site. NADP(+) contacts are provided by Val-170 and Lys-178. Lys-178 serves as the catalytic Proton acceptor. Substrate contacts are provided by residues Ser-180, His-187, 201–204 (FAGS), Arg-209, and Tyr-274.

Belongs to the NAD(P)-dependent epimerase/dehydratase family. HldD subfamily. Homopentamer. Requires NADP(+) as cofactor.

It catalyses the reaction ADP-D-glycero-beta-D-manno-heptose = ADP-L-glycero-beta-D-manno-heptose. It participates in nucleotide-sugar biosynthesis; ADP-L-glycero-beta-D-manno-heptose biosynthesis; ADP-L-glycero-beta-D-manno-heptose from D-glycero-beta-D-manno-heptose 7-phosphate: step 4/4. The protein operates within bacterial outer membrane biogenesis; LPS core biosynthesis. Functionally, catalyzes the interconversion between ADP-D-glycero-beta-D-manno-heptose and ADP-L-glycero-beta-D-manno-heptose via an epimerization at carbon 6 of the heptose. This Photorhabdus laumondii subsp. laumondii (strain DSM 15139 / CIP 105565 / TT01) (Photorhabdus luminescens subsp. laumondii) protein is ADP-L-glycero-D-manno-heptose-6-epimerase.